A 219-amino-acid chain; its full sequence is MNKDGQDLSDIRRAMVRCQLVPRGISDGRVLEAMERVPREQFVPEHLRFEAYEDHPVPIGQGQTISQPYIVALMAEALCLKGRERVLDIGTGSGYAAAVLASLALEVFSIERIPELAAQARKNLDRTGFTQVHVKCADGTLGWPEAAPFDGICVAAGAPAVPAALKQQLAVGGRLVIPVGTEGGLQQLLCITRLSDSEYEQASYGDVRFVPLLGEEGWP.

Ser-66 is an active-site residue.

Belongs to the methyltransferase superfamily. L-isoaspartyl/D-aspartyl protein methyltransferase family.

The protein localises to the cytoplasm. The enzyme catalyses [protein]-L-isoaspartate + S-adenosyl-L-methionine = [protein]-L-isoaspartate alpha-methyl ester + S-adenosyl-L-homocysteine. Catalyzes the methyl esterification of L-isoaspartyl residues in peptides and proteins that result from spontaneous decomposition of normal L-aspartyl and L-asparaginyl residues. It plays a role in the repair and/or degradation of damaged proteins. In Marinobacter nauticus (strain ATCC 700491 / DSM 11845 / VT8) (Marinobacter aquaeolei), this protein is Protein-L-isoaspartate O-methyltransferase 2.